Here is a 760-residue protein sequence, read N- to C-terminus: Prolyl endopeptidase FAP (760 aa).

Topologically, residues 1-4 are cytoplasmic; it reads MKTW. The chain crosses the membrane as a helical; Signal-anchor for type II membrane protein span at residues 5 to 25; that stretch reads LKIVFGVATSAVLALLVMCIV. The Extracellular segment spans residues 26–760; it reads LRPSRVHNSE…FLKQCFSLSD (735 aa). N-linked (GlcNAc...) asparagine glycosylation is found at asparagine 49, asparagine 92, and asparagine 99. Residues glutamate 203 and glutamate 204 each coordinate substrate. 2 N-linked (GlcNAc...) asparagine glycosylation sites follow: asparagine 227 and asparagine 314. 3 cysteine pairs are disulfide-bonded: cysteine 321/cysteine 332, cysteine 438/cysteine 441, and cysteine 448/cysteine 466. Positions 481-512 form a coiled coil; sequence TDQEIKILEDNKELENALKNIQLPKEEIKKLK. Serine 624 acts as the Charge relay system in catalysis. A disulfide bridge connects residues cysteine 643 and cysteine 755. N-linked (GlcNAc...) asparagine glycosylation is present at asparagine 679. Residues aspartate 702 and histidine 734 each act as charge relay system in the active site.

This sequence belongs to the peptidase S9B family. In terms of assembly, homodimer; homodimerization is required for activity of both plasma membrane and soluble forms. The monomer is inactive. Heterodimer with DPP4. Interacts with PLAUR; the interaction occurs at the cell surface of invadopodia membranes. Interacts with ITGB1. Interacts with ITGA3. Associates with integrin alpha-3/beta-1; the association occurs in a collagen-dependent manner at the cell surface of invadopodia membranes. In terms of processing, N-glycosylated. The N-terminus may be blocked.

Its subcellular location is the cell surface. It is found in the cell membrane. The protein localises to the cell projection. It localises to the lamellipodium membrane. The protein resides in the invadopodium membrane. Its subcellular location is the ruffle membrane. It is found in the membrane. The protein localises to the secreted. It catalyses the reaction Release of an N-terminal dipeptide, Xaa-Yaa-|-Zaa-, from a polypeptide, preferentially when Yaa is Pro, provided Zaa is neither Pro nor hydroxyproline.. It carries out the reaction Hydrolysis of Pro-|-Xaa &gt;&gt; Ala-|-Xaa in oligopeptides.. With respect to regulation, gelatinase activity is inhibited by serine-protease inhibitors, such as phenylmethylsulfonyl fluoride (PMSF), 4-(2-aminoethyl)-benzenesulfonyl fluoride hydrochloride (AEBSF), 4-amidino phenylsulfonyl fluoride (APSF) and diisopropyl fluorophosphate (DFP), N-ethylmaleimide (NEM) and phenylmethylsulfonyl fluoride (PMSF). Dipeptidyl peptidase activity is inhibited by 2,2'-azino-bis(3-ethylbenzthiazoline-6-sulfonic acid), diisopropylfluorophosphate (DFP). Prolyl endopeptidase activity is inhibited by the boronic acid peptide Ac-Gly-BoroPro, Ac-Gly-Pro-chloromethyl ketone and Thr-Ser-Gly-chloromethyl ketone. Functionally, cell surface glycoprotein serine protease that participates in extracellular matrix degradation and involved in many cellular processes including tissue remodeling, fibrosis, wound healing, inflammation and tumor growth. Both plasma membrane and soluble forms exhibit post-proline cleaving endopeptidase activity, with a marked preference for Ala/Ser-Gly-Pro-Ser/Asn/Ala consensus sequences, on substrate such as alpha-2-antiplasmin SERPINF2 and SPRY2. Degrade also gelatin, heat-denatured type I collagen, but not native collagen type I and IV, vibronectin, tenascin, laminin, fibronectin, fibrin or casein. Also has dipeptidyl peptidase activity, exhibiting the ability to hydrolyze the prolyl bond two residues from the N-terminus of synthetic dipeptide substrates provided that the penultimate residue is proline, with a preference for Ala-Pro, Ile-Pro, Gly-Pro, Arg-Pro and Pro-Pro. Natural neuropeptide hormones for dipeptidyl peptidase are the neuropeptide Y (NPY), peptide YY (PYY), substance P (TAC1) and brain natriuretic peptide 32 (NPPB). The plasma membrane form, in association with either DPP4, PLAUR or integrins, is involved in the pericellular proteolysis of the extracellular matrix (ECM), and hence promotes cell adhesion, migration and invasion through the ECM. Plays a role in tissue remodeling during development and wound healing. Participates in the cell invasiveness towards the ECM in malignant melanoma cancers. Enhances tumor growth progression by increasing angiogenesis, collagen fiber degradation and apoptosis and by reducing antitumor response of the immune system. Promotes glioma cell invasion through the brain parenchyma by degrading the proteoglycan brevican. Acts as a tumor suppressor in melanocytic cells through regulation of cell proliferation and survival in a serine protease activity-independent manner. In Bos taurus (Bovine), this protein is Prolyl endopeptidase FAP.